The following is a 733-amino-acid chain: Vinexin (733 aa).

Disordered regions lie at residues 1-51, 129-165, 224-285, and 352-448; these read MARI…SNLD, TWPG…RQDK, SARA…NQVP, and ETRL…KRKA. The segment covering 32-42 has biased composition (basic and acidic residues); the sequence is DPNRVHTKEQL. Residues 147–157 show a composition bias toward polar residues; the sequence is QHAQNWSATWT. The region spanning 164 to 232 is the SoHo domain; that stretch reads DKRWVKYEGI…VSARASSAEP (69 aa). Polar residues-rich tracts occupy residues 245–256 and 264–277; these read PGTTETSSGRNW and RNTF…SSSG. A phosphoserine mark is found at serine 412 and serine 459. SH3 domains lie at 444 to 503 and 518 to 579; these read KKRK…VLPA and LEYG…INRE. Residues 444–579 form a binds to vinculin region; that stretch reads KKRKAARLKF…PASYVQINRE (136 aa). A disordered region spans residues 584–672; that stretch reads LCDDGPQLPA…INLGPSSPNT (89 aa). Serine 594 bears the Phosphoserine; by MAPK1 mark. A compositionally biased stretch (low complexity) spans 597–613; it reads PTTTAHLSSHSHPSSIP. Serine 607, serine 610, and serine 624 each carry phosphoserine. Polar residues predominate over residues 638–651; the sequence is EPRSQTQSLNTPGP. Positions 674 to 733 constitute an SH3 3 domain; sequence IHWTPYRAMYQYRPQNEDELELREGDRVDVMQQCDDGWFVGVSRRTQKFGTFPGNYVAPV. Residues 674–733 are binds to SOS; the sequence is IHWTPYRAMYQYRPQNEDELELREGDRVDVMQQCDDGWFVGVSRRTQKFGTFPGNYVAPV.

In terms of assembly, interacts with vinculin by the first two SH3 domains and the proline rich region of vinculin. Binds to SOS (guanine nucleotide exchange factor of RAS and RAC), through its third SH3 domain. The formation of this complex is down-regulated by phosphorylation of SOS. Interacts with SAFB2, INPPL1/SHIP2 and SRCIN1. Interacts with DLG5 through its third SH3 domain. Interacts with SOCS7 and MAPK1/ERK2. Interacts with FASLG. In terms of processing, phosphorylated at Ser-594 by MAPK1/ERK2 during cell spreading.

It localises to the cell junction. The protein resides in the focal adhesion. The protein localises to the cytoplasm. It is found in the cytoskeleton. In terms of biological role, promotes up-regulation of actin stress fiber formation. The chain is Vinexin (Sorbs3) from Mus musculus (Mouse).